The following is a 224-amino-acid chain: Inner membrane-spanning protein YciB (224 aa).

6 helical membrane-spanning segments follow: residues 20 to 40, 61 to 81, 86 to 106, 123 to 143, 156 to 176, and 187 to 207; these read GVNPVLKLVLELGPLLVFFFA, IFVATGLFMAATAIALIASWL, LPIMPMVSGVVVFIFGALTLY, LFGGVLLGGLYFGRSLLGYVF, KLTFRWGLFFLFLAVVNEVVW, and FKVWGIMPITLLFTFSQMPLI.

This sequence belongs to the YciB family.

Its subcellular location is the cell inner membrane. Plays a role in cell envelope biogenesis, maintenance of cell envelope integrity and membrane homeostasis. This Mesorhizobium japonicum (strain LMG 29417 / CECT 9101 / MAFF 303099) (Mesorhizobium loti (strain MAFF 303099)) protein is Inner membrane-spanning protein YciB.